Reading from the N-terminus, the 214-residue chain is MSQITIALTKGRIEKDTVKLLTQAGFDMSFMADKGRSLIFESPDSRFRFLLVKGPDVTTYVRHGVADLGIVGKDILFEHPTGYLELLDLNFGLCKFSLASVPSYDPHDHKRKRIATKYPTVATDYFNQKGEDVEIISIQGSVEISPVLGLADAIVDIVETGHTLSANGLLVFEDICRVSARLIANQASLKNNPDIMPFVAKIESLVGRREVAFK.

The protein belongs to the ATP phosphoribosyltransferase family. Short subfamily. Heteromultimer composed of HisG and HisZ subunits.

It localises to the cytoplasm. It carries out the reaction 1-(5-phospho-beta-D-ribosyl)-ATP + diphosphate = 5-phospho-alpha-D-ribose 1-diphosphate + ATP. It functions in the pathway amino-acid biosynthesis; L-histidine biosynthesis; L-histidine from 5-phospho-alpha-D-ribose 1-diphosphate: step 1/9. Catalyzes the condensation of ATP and 5-phosphoribose 1-diphosphate to form N'-(5'-phosphoribosyl)-ATP (PR-ATP). Has a crucial role in the pathway because the rate of histidine biosynthesis seems to be controlled primarily by regulation of HisG enzymatic activity. The sequence is that of ATP phosphoribosyltransferase from Streptococcus sanguinis (strain SK36).